The primary structure comprises 382 residues: Cell division protein FtsZ (382 aa).

GTP contacts are provided by residues 21–25 (GGGNN), 108–110 (GTG), Glu139, Arg143, and Asp187. The segment at 320–382 (KDVTKPQRPS…TFLRNRNKRG (63 aa)) is disordered. Residues 326–341 (QRPSLNQSIKTHNQSV) are compositionally biased toward polar residues. A compositionally biased stretch (basic and acidic residues) spans 342 to 351 (PKREPKREEP). Polar residues predominate over residues 352–365 (QQQNTVSRHTSQPA).

Belongs to the FtsZ family. In terms of assembly, homodimer. Polymerizes to form a dynamic ring structure in a strictly GTP-dependent manner. Interacts directly with several other division proteins. Interacts with FtsA. Interacts with Phi29 DNA replication protein 1. Interacts with the cell division inhibitor MciZ.

It localises to the cytoplasm. During sporulation, is negatively regulated by MciZ, which binds to FtsZ and inhibits its polymerization and the formation of the Z ring. Essential cell division protein that forms a contractile ring structure (Z ring) at the future cell division site. The regulation of the ring assembly controls the timing and the location of cell division. One of the functions of the FtsZ ring is to recruit other cell division proteins to the septum to produce a new cell wall between the dividing cells. Binds GTP and shows GTPase activity. This is Cell division protein FtsZ from Bacillus subtilis (strain 168).